The following is a 136-amino-acid chain: Large ribosomal subunit protein uL16 (136 aa).

The protein belongs to the universal ribosomal protein uL16 family. Part of the 50S ribosomal subunit.

Its function is as follows. Binds 23S rRNA and is also seen to make contacts with the A and possibly P site tRNAs. The chain is Large ribosomal subunit protein uL16 from Vesicomyosocius okutanii subsp. Calyptogena okutanii (strain HA).